The chain runs to 31 residues: Electron transfer flavoprotein-ubiquinone oxidoreductase (31 aa).

11 to 25 (VVIVGAGGAGLSAAI) lines the FAD pocket.

As to quaternary structure, monomer. The cofactor is [4Fe-4S] cluster. It depends on FAD as a cofactor.

The catalysed reaction is a ubiquinone + reduced [electron-transfer flavoprotein] = a ubiquinol + oxidized [electron-transfer flavoprotein] + H(+). Its function is as follows. Accepts electrons from ETF and reduces ubiquinone. The sequence is that of Electron transfer flavoprotein-ubiquinone oxidoreductase from Paracoccus denitrificans.